Here is a 734-residue protein sequence, read N- to C-terminus: Photosystem I P700 chlorophyll a apoprotein A2 (734 aa).

The next 8 membrane-spanning stretches (helical) occupy residues Ile46–Ala69, Leu135–Gln158, Leu175–Ile199, Ile273–Tyr291, Leu330–Tyr353, Ala369–Ile395, Ala417–His439, and Phe517–Val535. 2 residues coordinate [4Fe-4S] cluster: Cys559 and Cys568. 2 consecutive transmembrane segments (helical) span residues Ala575–Trp596 and Leu643–Ile665. Positions 654, 662, and 670 each coordinate chlorophyll a. A phylloquinone-binding site is contributed by Trp671. Residues Leu707–Ala727 traverse the membrane as a helical segment.

It belongs to the PsaA/PsaB family. The PsaA/B heterodimer binds the P700 chlorophyll special pair and subsequent electron acceptors. PSI consists of a core antenna complex that captures photons, and an electron transfer chain that converts photonic excitation into a charge separation. The eukaryotic PSI reaction center is composed of at least 11 subunits. The cofactor is P700 is a chlorophyll a/chlorophyll a' dimer, A0 is one or more chlorophyll a, A1 is one or both phylloquinones and FX is a shared 4Fe-4S iron-sulfur center..

The protein localises to the plastid. The protein resides in the chloroplast thylakoid membrane. The enzyme catalyses reduced [plastocyanin] + hnu + oxidized [2Fe-2S]-[ferredoxin] = oxidized [plastocyanin] + reduced [2Fe-2S]-[ferredoxin]. Functionally, psaA and PsaB bind P700, the primary electron donor of photosystem I (PSI), as well as the electron acceptors A0, A1 and FX. PSI is a plastocyanin/cytochrome c6-ferredoxin oxidoreductase, converting photonic excitation into a charge separation, which transfers an electron from the donor P700 chlorophyll pair to the spectroscopically characterized acceptors A0, A1, FX, FA and FB in turn. Oxidized P700 is reduced on the lumenal side of the thylakoid membrane by plastocyanin or cytochrome c6. This Oltmannsiellopsis viridis (Marine flagellate) protein is Photosystem I P700 chlorophyll a apoprotein A2.